We begin with the raw amino-acid sequence, 624 residues long: Glyco-Gag protein (624 aa).

Topologically, residues 1–63 are cytoplasmic; sequence LGDVPGTSGA…FLPSVWNRSR (63 aa). The chain crosses the membrane as a helical span at residues 64–86; it reads AARLVCCSIVLCCLCLAVFLYWS. The Extracellular portion of the chain corresponds to 87-624; the sequence is ENMGQTVTTP…PQTSLLALDD (538 aa). Asparagine 113 is a glycosylation site (N-linked (GlcNAc...) asparagine; by host). Pro residues-rich tracts occupy residues 200 to 209 and 247 to 258; these read PSLLPEPPLS and DPPPYRDPGPPP. Disordered regions lie at residues 200 to 284 and 290 to 309; these read PSLL…ASRL and LPVA…GGNG. Asparagine 478 carries an N-linked (GlcNAc...) asparagine; by host glycan. 2 stretches are compositionally biased toward basic and acidic residues: residues 520–552 and 572–605; these read RETP…EKER and KQDR…DCPK. Residues 520-624 are disordered; it reads RETPEEREER…PQTSLLALDD (105 aa).

Post-translationally, glycosylated by host. Cleaved by host near the middle of the molecule, releasing the c-terminal half containing capsid and nucleoprotein domains op GAG.

Its subcellular location is the host cell membrane. Its function is as follows. Plays a role in viral particle release. Presumably acts by facilitating the fission of the virion bud at the cell surface. May prevent the antiviral activity of murine APOBEC3. The chain is Glyco-Gag protein from Mus musculus (Mouse).